A 306-amino-acid polypeptide reads, in one-letter code: Aspartate carbamoyltransferase catalytic subunit (306 aa).

Arg-55 and Thr-56 together coordinate carbamoyl phosphate. An L-aspartate-binding site is contributed by Lys-84. 3 residues coordinate carbamoyl phosphate: Arg-105, His-133, and Gln-136. Arg-166 and Arg-227 together coordinate L-aspartate. Residues Leu-265 and Pro-266 each contribute to the carbamoyl phosphate site.

This sequence belongs to the aspartate/ornithine carbamoyltransferase superfamily. ATCase family. As to quaternary structure, heterododecamer (2C3:3R2) of six catalytic PyrB chains organized as two trimers (C3), and six regulatory PyrI chains organized as three dimers (R2).

It carries out the reaction carbamoyl phosphate + L-aspartate = N-carbamoyl-L-aspartate + phosphate + H(+). It participates in pyrimidine metabolism; UMP biosynthesis via de novo pathway; (S)-dihydroorotate from bicarbonate: step 2/3. Its function is as follows. Catalyzes the condensation of carbamoyl phosphate and aspartate to form carbamoyl aspartate and inorganic phosphate, the committed step in the de novo pyrimidine nucleotide biosynthesis pathway. The sequence is that of Aspartate carbamoyltransferase catalytic subunit from Neisseria meningitidis serogroup C / serotype 2a (strain ATCC 700532 / DSM 15464 / FAM18).